Reading from the N-terminus, the 101-residue chain is MAKQSMIARDVKRAKLADKFYAKREELKKIISDANSSDEDRWAAVLKLQTLPRDSSPSRQRNRCRQTGRPHGVLRKFGLSRIKVREAAMRGEIPGLKKASW.

Belongs to the universal ribosomal protein uS14 family. As to quaternary structure, part of the 30S ribosomal subunit. Contacts proteins S3 and S10.

In terms of biological role, binds 16S rRNA, required for the assembly of 30S particles and may also be responsible for determining the conformation of the 16S rRNA at the A site. The sequence is that of Small ribosomal subunit protein uS14 from Actinobacillus pleuropneumoniae serotype 5b (strain L20).